The following is a 108-amino-acid chain: MNKYKKIKNNFDKEKKSYIVGFLFSLFLTIIPFFCTLNHLFSRKINFFVILLCALSQIIIHFIYFLHLDFSKKNSWNIISLLFILIIVFIIVFGSIWIMYNLNHHVIL.

Over 1–16 (MNKYKKIKNNFDKEKK) the chain is Cytoplasmic. A helical membrane pass occupies residues 17 to 37 (SYIVGFLFSLFLTIIPFFCTL). The Extracellular segment spans residues 38-46 (NHLFSRKIN). Residues 47–67 (FFVILLCALSQIIIHFIYFLH) traverse the membrane as a helical segment. At 68–77 (LDFSKKNSWN) the chain is on the cytoplasmic side. The helical transmembrane segment at 78–98 (IISLLFILIIVFIIVFGSIWI) threads the bilayer. The Extracellular portion of the chain corresponds to 99–108 (MYNLNHHVIL).

The protein belongs to the cytochrome c oxidase bacterial subunit 4 family. Heterooctamer of two A chains, two B chains, two C chains and two D chains.

It localises to the cell membrane. Cytochrome bo(3) ubiquinol terminal oxidase is the component of the aerobic respiratory chain of E.coli that predominates when cells are grown at high aeration. Has proton pump activity across the membrane in addition to electron transfer, pumping 2 protons/electron. The sequence is that of Cytochrome bo(3) ubiquinol oxidase subunit 4 (cyoD) from Buchnera aphidicola subsp. Schizaphis graminum (strain Sg).